Here is an 81-residue protein sequence, read N- to C-terminus: MKQNLHPKVNTVVFKDISCDFSFLGTSTLHSSETVKWEDGKEYPLIKVEISSASHPFFTGKQRVMDTEGRIDRFKKRYGKK.

This sequence belongs to the bacterial ribosomal protein bL31 family. Type B subfamily. As to quaternary structure, part of the 50S ribosomal subunit.

The protein is Large ribosomal subunit protein bL31B of Bdellovibrio bacteriovorus (strain ATCC 15356 / DSM 50701 / NCIMB 9529 / HD100).